The following is a 227-amino-acid chain: 7-cyano-7-deazaguanine synthase (227 aa).

8 to 18 (FSGGQDSTTCL) provides a ligand contact to ATP. Zn(2+) is bound by residues Cys187, Cys196, Cys199, and Cys202.

This sequence belongs to the QueC family. The cofactor is Zn(2+).

The catalysed reaction is 7-carboxy-7-deazaguanine + NH4(+) + ATP = 7-cyano-7-deazaguanine + ADP + phosphate + H2O + H(+). It participates in purine metabolism; 7-cyano-7-deazaguanine biosynthesis. Functionally, catalyzes the ATP-dependent conversion of 7-carboxy-7-deazaguanine (CDG) to 7-cyano-7-deazaguanine (preQ(0)). The protein is 7-cyano-7-deazaguanine synthase of Aliivibrio fischeri (strain MJ11) (Vibrio fischeri).